The primary structure comprises 1274 residues: DENN domain-containing protein 5B (1274 aa).

An N-acetylserine modification is found at serine 2. The uDENN domain maps to 39-244; it reads DELAGENFDQ…EVPLPPPGRS (206 aa). 2 positions are modified to phosphoserine: serine 49 and serine 178. Residues 263 to 399 form the cDENN domain; the sequence is ELPLSDYPLR…VDFIQELSEV (137 aa). The region spanning 401-581 is the dDENN domain; it reads VQFGIPPEGS…DNKIMSQWEE (181 aa). Residues 772 to 932 form the RUN 1 domain; it reads LEENTLIASL…DYFCFTSVFT (161 aa). Serine 822 carries the phosphoserine modification. Residues 916–936 traverse the membrane as a helical segment; it reads LLSLNAVDYFCFTSVFTTIMI. In terms of domain architecture, PLAT spans 936–1044; it reads IPYRSVIIPI…DDGSLERILI (109 aa). Threonine 1062 is subject to Phosphothreonine. Phosphoserine occurs at positions 1068, 1076, and 1079. The RUN 2 domain maps to 1118-1267; sequence TVLLCGENGL…QDFTIVLEGS (150 aa).

The protein belongs to the RAB6IP1 family.

It is found in the membrane. Guanine nucleotide exchange factor (GEF) which may activate RAB39A and/or RAB39B. Promotes the exchange of GDP to GTP, converting inactive GDP-bound Rab proteins into their active GTP-bound form. The chain is DENN domain-containing protein 5B (DENND5B) from Homo sapiens (Human).